The primary structure comprises 199 residues: NAD(P)H dehydrogenase (quinone) (199 aa).

The Flavodoxin-like domain occupies 4 to 190 (VLVLYYSSWG…DGARFQGRHV (187 aa)). FMN is bound by residues 10–15 (SSWGHV) and 78–80 (TRY). Tryptophan 12 lines the NAD(+) pocket. Tryptophan 98 is a substrate binding site. Residues 113-119 (STASQHG) and histidine 134 contribute to the FMN site.

Belongs to the WrbA family. FMN is required as a cofactor.

The catalysed reaction is a quinone + NADH + H(+) = a quinol + NAD(+). It carries out the reaction a quinone + NADPH + H(+) = a quinol + NADP(+). The chain is NAD(P)H dehydrogenase (quinone) from Methylorubrum extorquens (strain CM4 / NCIMB 13688) (Methylobacterium extorquens).